Consider the following 384-residue polypeptide: MYINYLKDLIGFKSVTPESNLAIEYIDDLLKKHGFKTEIKIFGDSKSEQVTNLYAVYGNGKPNICFVGHVDVVPAGDYHLWHNSAPFKANEQDGKIYGRGVVDMKGAIACFLTAALDLIKNNPDFKGSISFLLTSDEEGKAKHGTKEMLQYIYDQEYKIDFAVVGEPTCETEIGDTIKIGRRGSVNFKLNIEGLVGHVAYPHKANNPLSCLIKILNELINIKFDEGTEFFQSSNLEVTNIDVGNNTSNVIPASVEAYFNIRFNNLHNAETLGQLIEQIVKRYCKEYKVDYKLEYISAAESFIQNPNDKIKDFADIVESTLKIKPKFSTSGGTSDARFVKNYCSLVEFGLLSEMAHKINEYTKISDLQKLYDVYYNFLMEMLTNK.

A Zn(2+)-binding site is contributed by H69. D71 is an active-site residue. D103 provides a ligand contact to Zn(2+). The Proton acceptor role is filled by E137. Zn(2+) is bound by residues E138, E166, and H355.

This sequence belongs to the peptidase M20A family. DapE subfamily. Homodimer. The cofactor is Zn(2+). It depends on Co(2+) as a cofactor.

It catalyses the reaction N-succinyl-(2S,6S)-2,6-diaminopimelate + H2O = (2S,6S)-2,6-diaminopimelate + succinate. It participates in amino-acid biosynthesis; L-lysine biosynthesis via DAP pathway; LL-2,6-diaminopimelate from (S)-tetrahydrodipicolinate (succinylase route): step 3/3. Its function is as follows. Catalyzes the hydrolysis of N-succinyl-L,L-diaminopimelic acid (SDAP), forming succinate and LL-2,6-diaminopimelate (DAP), an intermediate involved in the bacterial biosynthesis of lysine and meso-diaminopimelic acid, an essential component of bacterial cell walls. In Rickettsia canadensis (strain McKiel), this protein is Succinyl-diaminopimelate desuccinylase.